We begin with the raw amino-acid sequence, 319 residues long: Probable murein peptide carboxypeptidase (319 aa).

The active-site Nucleophile is Ser-116. Catalysis depends on charge relay system residues Glu-214 and His-284.

The protein belongs to the peptidase S66 family.

The protein localises to the cytoplasm. The protein operates within cell wall degradation; peptidoglycan degradation. Its function is as follows. May be involved in the degradation of peptidoglycan by catalyzing the cleavage of the terminal D-alanine residue from cytoplasmic murein peptides. The chain is Probable murein peptide carboxypeptidase (ykfA) from Bacillus subtilis (strain 168).